Consider the following 519-residue polypeptide: Sorting nexin-2 (519 aa).

2 disordered regions span residues 1–20 and 30–103; these read MAAEREPPPLGDGKPTDFEE and STVS…VTPV. 2 stretches are compositionally biased toward low complexity: residues 30-44 and 93-103; these read STVSTLESSPSSPDP and SSETSPAVTPV. Position 97 is a phosphoserine (serine 97). Residues threonine 101 and threonine 104 each carry the phosphothreonine modification. A phosphoserine mark is found at serine 117 and serine 119. Residues 140–269 form the PX domain; sequence FDIEIGVSDP…QFLESSELPR (130 aa). A 1,2-diacyl-sn-glycero-3-phospho-(1D-myo-inositol-3-phosphate) is bound by residues arginine 183, serine 185, lysine 211, and arginine 235. Phosphoserine is present on serine 185. Residues 260–519 form an interaction with RhoG region; that stretch reads QFLESSELPR…AFLPEAKAIA (260 aa). A Phosphoserine modification is found at serine 277. The segment at 278–295 is membrane-binding amphipathic helix; it reads GAGILRMVNKAADAVNKM. The BAR domain maps to 299–519; sequence MNESDAWFEE…AFLPEAKAIA (221 aa). Lysine 469 is modified (N6-acetyllysine).

The protein belongs to the sorting nexin family. In terms of assembly, predominantly forms heterodimers with BAR domain-containing sorting nexins SNX5, SNX6 and SNX32; can self-associate to form homodimers. The heterodimers are proposed to self-assemble into helical arrays on the membrane to stabilize and expand local membrane curvature underlying endosomal tubule formation. Thought to be a component of the originally described retromer complex (also called SNX-BAR retromer) which is a pentamer containing the heterotrimeric retromer cargo-selective complex (CSC), also decribed as vacuolar protein sorting subcomplex (VPS) and a heterodimeric membrane-deforming subcomplex formed between SNX1 or SNX2 and SNX5 or SNX6 (also called SNX-BAR subcomplex); the respective CSC and SNX-BAR subcomplexes associate with low affinity. Interacts with SNX5, SNX6, SNX32, VPS26A, VPS29, VPS35, FNBP1, KALRN, RHOG (GDP-bound form).

It is found in the early endosome membrane. It localises to the cell projection. Its subcellular location is the lamellipodium. Its function is as follows. Involved in several stages of intracellular trafficking. Interacts with membranes containing phosphatidylinositol 3-phosphate (PtdIns(3P)) or phosphatidylinositol 3,5-bisphosphate (PtdIns(3,5)P2). Acts in part as component of the retromer membrane-deforming SNX-BAR subcomplex. The SNX-BAR retromer mediates retrograde transport of cargo proteins from endosomes to the trans-Golgi network (TGN) and is involved in endosome-to-plasma membrane transport for cargo protein recycling. The SNX-BAR subcomplex functions to deform the donor membrane into a tubular profile called endosome-to-TGN transport carrier (ETC). Can sense membrane curvature and has in vitro vesicle-to-membrane remodeling activity. Required for retrograde endosome-to-TGN transport of TGN38. Promotes KALRN- and RHOG-dependent but retromer-independent membrane remodeling such as lamellipodium formation; the function is dependent on GEF activity of KALRN. The polypeptide is Sorting nexin-2 (SNX2) (Bos taurus (Bovine)).